A 294-amino-acid chain; its full sequence is 33 kDa chaperonin (294 aa).

Cystine bridges form between C238–C240 and C271–C274.

It belongs to the HSP33 family. Post-translationally, under oxidizing conditions two disulfide bonds are formed involving the reactive cysteines. Under reducing conditions zinc is bound to the reactive cysteines and the protein is inactive.

Its subcellular location is the cytoplasm. Functionally, redox regulated molecular chaperone. Protects both thermally unfolding and oxidatively damaged proteins from irreversible aggregation. Plays an important role in the bacterial defense system toward oxidative stress. The polypeptide is 33 kDa chaperonin (Clostridium novyi (strain NT)).